A 786-amino-acid polypeptide reads, in one-letter code: von Willebrand factor A domain-containing protein 5A (786 aa).

Residues 1–131 (MVHFCGLLTL…KAAVTLKYVQ (131 aa)) enclose the VIT domain. A VWFA domain is found at 281–462 (EFIFLMDRSG…KALRTLKRSL (182 aa)).

As to expression, expressed at low level in many tissues. Not expressed in 80% of tumor cell lines tested.

Its function is as follows. May play a role in tumorigenesis as a tumor suppressor. Altered expression of this protein and disruption of the molecular pathway it is involved in, may contribute directly to or modify tumorigenesis. The protein is von Willebrand factor A domain-containing protein 5A (VWA5A) of Homo sapiens (Human).